The chain runs to 476 residues: MASPANQTGRITQVIGAVVDVQFEGHLPAILNAIETKNGDNRLVLEVAQHLGESTVRTIAMDTTEGLVRGQEVKDTGNPILVPVGVGTLGRIMNVIGEPVDEQGPVKAEDMRAIHQEAPLYTDQSTEAEILVTGIKVVDLLAPYAKGGKIGLFGGAGVGKTVLIQELINNVAKAHGGYSVFAGVGERTREGNDLYHEFIESGVNKKGGGEGSKCALVYGQMNEPPGARARVALSGLTVAEHFRDQGQDVLFFVDNIFRFTQAGSEVSALLGRIPSAVGYQPTLATDMGALQERITTTTKGSITSIQAIYVPADDLTDPAPATSFAHLDATTTLNRAISEKGIYPAVDPLDSTSRMLSPLIVGEEHYQTARMVQQVLQRYKSLQDIIAILGMDELSEEDKIAVARARKIERFLSQPFFVAEIFTGAPGKFVDLADTIKGFRAICDGKYDHLPEAAFYMVGTIEEAVEKGKKLAAEAA.

An ATP-binding site is contributed by 154–161 (GGAGVGKT).

Belongs to the ATPase alpha/beta chains family. In terms of assembly, F-type ATPases have 2 components, CF(1) - the catalytic core - and CF(0) - the membrane proton channel. CF(1) has five subunits: alpha(3), beta(3), gamma(1), delta(1), epsilon(1). CF(0) has three main subunits: a(1), b(2) and c(9-12). The alpha and beta chains form an alternating ring which encloses part of the gamma chain. CF(1) is attached to CF(0) by a central stalk formed by the gamma and epsilon chains, while a peripheral stalk is formed by the delta and b chains.

Its subcellular location is the cell inner membrane. It carries out the reaction ATP + H2O + 4 H(+)(in) = ADP + phosphate + 5 H(+)(out). Its function is as follows. Produces ATP from ADP in the presence of a proton gradient across the membrane. The catalytic sites are hosted primarily by the beta subunits. The polypeptide is ATP synthase subunit beta (Nitrobacter hamburgensis (strain DSM 10229 / NCIMB 13809 / X14)).